The chain runs to 253 residues: MTTSRCSHLPEVLPDCTSSAAPVVKTVEDCGSLVNGQPQYVMQVSAKDGQLLSTVVRTLATQSPFNDRPMCRICHEGSSQEDLLSPCECTGTLGTIHRSCLEHWLSSSNTSYCELCHFRFAVERKPRPLVEWLRNPGPQHEKRTLFGDMVCFLFITPLATISGWLCLRGAVDHLHFSSRLEAVGLIALTVALFTIYLFWTLVSFRYHCRLYNEWRRTNQRVILLIPKSVNVPSNQPSLLGLHSVKRNSKETVV.

The RING-CH-type zinc-finger motif lies at 63–123; the sequence is SPFNDRPMCR…ELCHFRFAVE (61 aa). The Zn(2+) site is built by Cys71, Cys74, Cys87, Cys89, His97, Cys100, Cys113, and Cys116. 2 helical membrane-spanning segments follow: residues 145-165 and 182-202; these read LFGDMVCFLFITPLATISGWL and AVGLIALTVALFTIYLFWTLV. Ser237 and Ser243 each carry phosphoserine.

As to quaternary structure, interacts with MARCHF2 and STX6.

Its subcellular location is the cytoplasmic vesicle membrane. It is found in the early endosome membrane. It catalyses the reaction S-ubiquitinyl-[E2 ubiquitin-conjugating enzyme]-L-cysteine + [acceptor protein]-L-lysine = [E2 ubiquitin-conjugating enzyme]-L-cysteine + N(6)-ubiquitinyl-[acceptor protein]-L-lysine.. It participates in protein modification; protein ubiquitination. In terms of biological role, E3 ubiquitin-protein ligase which may be involved in endosomal trafficking. E3 ubiquitin ligases accept ubiquitin from an E2 ubiquitin-conjugating enzyme in the form of a thioester and then directly transfer the ubiquitin to targeted substrates. This Homo sapiens (Human) protein is E3 ubiquitin-protein ligase MARCHF3.